A 224-amino-acid polypeptide reads, in one-letter code: Propanediol dehydratase medium subunit (224 aa).

Residues 1–18 are targets protein to the BMC; it reads MEINEKLLRQIIEDVLSE.

This sequence belongs to the diol/glycerol dehydratase medium subunit family. As to quaternary structure, the propanediol dehydratase enzyme is a heterotrimeric complex composed of a large (PduC), a medium (PduD) and a small (PduE) subunit. Adenosylcob(III)alamin is required as a cofactor.

Its subcellular location is the bacterial microcompartment. The catalysed reaction is propane-1,2-diol = propanal + H2O. It participates in polyol metabolism; 1,2-propanediol degradation. Part of the PduCDE complex that catalyzes the dehydration of 1,2-propanediol (1,2-PD) to propionaldehyde. This subunit is directly targeted to the bacterial microcompartment (BMC). Functionally, expression of a cosmid containing the full 21-gene pdu operon in E.coli allows E.coli to grow on 1,2-propanediol (1,2-PD) with the appearance of BMCs in its cytoplasm. Its function is as follows. The 1,2-PD-specific bacterial microcompartment (BMC) concentrates low levels of 1,2-PD catabolic enzymes, concentrates volatile reaction intermediates thus enhancing pathway flux and keeps the level of toxic, mutagenic propionaldehyde low. The sequence is that of Propanediol dehydratase medium subunit from Citrobacter freundii.